A 58-amino-acid polypeptide reads, in one-letter code: Large ribosomal subunit protein bL32 (58 aa).

It belongs to the bacterial ribosomal protein bL32 family.

The polypeptide is Large ribosomal subunit protein bL32 (Synechococcus sp. (strain WH7803)).